The primary structure comprises 437 residues: Ribosomal protein uS12 methylthiotransferase RimO (437 aa).

The MTTase N-terminal domain occupies 4 to 114 (PRVSFVSLGC…VMSAVHEAVP (111 aa)). [4Fe-4S] cluster contacts are provided by C13, C49, C78, C145, C149, and C152. Positions 131-369 (LTPRHYAYLK…MAKQQQISTN (239 aa)) constitute a Radical SAM core domain. In terms of domain architecture, TRAM spans 372 to 437 (KKKVGKRLPV…DAYDLHGIAV (66 aa)).

It belongs to the methylthiotransferase family. RimO subfamily. [4Fe-4S] cluster is required as a cofactor.

Its subcellular location is the cytoplasm. The catalysed reaction is L-aspartate(89)-[ribosomal protein uS12]-hydrogen + (sulfur carrier)-SH + AH2 + 2 S-adenosyl-L-methionine = 3-methylsulfanyl-L-aspartate(89)-[ribosomal protein uS12]-hydrogen + (sulfur carrier)-H + 5'-deoxyadenosine + L-methionine + A + S-adenosyl-L-homocysteine + 2 H(+). In terms of biological role, catalyzes the methylthiolation of an aspartic acid residue of ribosomal protein uS12. In Brucella anthropi (strain ATCC 49188 / DSM 6882 / CCUG 24695 / JCM 21032 / LMG 3331 / NBRC 15819 / NCTC 12168 / Alc 37) (Ochrobactrum anthropi), this protein is Ribosomal protein uS12 methylthiotransferase RimO.